The following is a 76-amino-acid chain: Contulakin-G (76 aa).

The N-terminal stretch at 1–22 is a signal peptide; sequence MQTAYWVMVMMMVWIAAPLSEG. Positions 23-50 are excised as a propeptide; the sequence is GKLNDVIRGLVPDDITPQLILGSLISRR. Glutamine 51 is modified (pyrrolidone carboxylic acid). A disordered region spans residues 51–76; it reads QSEEGGSNATKKPYILRASDQVASGP. O-linked (GalNAc...) threonine glycosylation is present at threonine 60. A propeptide spanning residues 67–76 is cleaved from the precursor; sequence RASDQVASGP.

Belongs to the conotoxin C superfamily. Post-translationally, O-glycosylated. The glycosylation seems to enhance the affinity to the neurotensin receptors. As to expression, expressed by the venom duct.

It localises to the secreted. Its function is as follows. Acts as an agonist of neurotensin receptors. It binds to human neurotensin type 1 receptor (NTSR1), rat neurotensin types 1 and 2 receptors (NTSR1/NTSR2) and mouse neurotensin type 3 receptor (SORT1). The polypeptide is Contulakin-G (Conus geographus (Geography cone)).